Here is a 441-residue protein sequence, read N- to C-terminus: Peroxisome proliferator-activated receptor delta (441 aa).

The tract at residues 1 to 58 is disordered; sequence MEQPPGEAAEVREEEEKKEVAEAEGAPELNGGPERSLPSSSYTDLSRSSSPPSLLDQL. Over residues 9–21 the composition is skewed to basic and acidic residues; that stretch reads AEVREEEEKKEVA. Residues 36 to 55 show a composition bias toward low complexity; that stretch reads SLPSSSYTDLSRSSSPPSLL. Residues 70–145 constitute a DNA-binding region (nuclear receptor); that stretch reads LNMECRVCGD…LGMSHNAIRF (76 aa). 2 NR C4-type zinc fingers span residues 74 to 94 and 111 to 133; these read CRVCGDKASGFHYGVHACEGC and CERICKIQKKNRNKCQYCRFQKC. The region spanning 211–439 is the NR LBD domain; that stretch reads FVIHDIETLW…HPLLQEIYKD (229 aa).

This sequence belongs to the nuclear hormone receptor family. NR1 subfamily. Heterodimer with the retinoid X receptor. Interacts (via domain NR LBD) with CRY1 and CRY2 in a ligand-dependent manner. In terms of processing, 'Lys-48'-linked polyubiquitinated; leading to proteasomal degradation. Deubiquitinated and stabilized by OTUD3.

The protein localises to the nucleus. Functionally, ligand-activated transcription factor key mediator of energy metabolism in adipose tissues. Receptor that binds peroxisome proliferators such as hypolipidemic drugs and fatty acids. Has a preference for poly-unsaturated fatty acids, such as gamma-linoleic acid and eicosapentanoic acid. Once activated by a ligand, the receptor binds to promoter elements of target genes. Regulates the peroxisomal beta-oxidation pathway of fatty acids. Functions as a transcription activator for the acyl-CoA oxidase gene. Decreases expression of NPC1L1 once activated by a ligand. The protein is Peroxisome proliferator-activated receptor delta (PPARD) of Canis lupus familiaris (Dog).